The chain runs to 98 residues: Large ribosomal subunit protein uL23 (98 aa).

This sequence belongs to the universal ribosomal protein uL23 family. Part of the 50S ribosomal subunit. Contacts protein L29, and trigger factor when it is bound to the ribosome.

In terms of biological role, one of the early assembly proteins it binds 23S rRNA. One of the proteins that surrounds the polypeptide exit tunnel on the outside of the ribosome. Forms the main docking site for trigger factor binding to the ribosome. The protein is Large ribosomal subunit protein uL23 of Teredinibacter turnerae (strain ATCC 39867 / T7901).